Here is a 345-residue protein sequence, read N- to C-terminus: Ferrochelatase (345 aa).

The Fe cation site is built by H192 and E295.

It belongs to the ferrochelatase family.

The protein localises to the cytoplasm. The enzyme catalyses heme b + 2 H(+) = protoporphyrin IX + Fe(2+). The protein operates within porphyrin-containing compound metabolism; protoheme biosynthesis; protoheme from protoporphyrin-IX: step 1/1. In terms of biological role, catalyzes the ferrous insertion into protoporphyrin IX. In Opitutus terrae (strain DSM 11246 / JCM 15787 / PB90-1), this protein is Ferrochelatase.